The following is a 197-amino-acid chain: GTP cyclohydrolase-2 (197 aa).

50 to 54 (RIHSE) lines the GTP pocket. 3 residues coordinate Zn(2+): Cys55, Cys66, and Cys68. GTP is bound by residues Gln71, 93–95 (EGR), and Thr115. Catalysis depends on Asp127, which acts as the Proton acceptor. Residue Arg129 is the Nucleophile of the active site. Residues Thr150 and Lys155 each coordinate GTP.

It belongs to the GTP cyclohydrolase II family. The cofactor is Zn(2+).

The catalysed reaction is GTP + 4 H2O = 2,5-diamino-6-hydroxy-4-(5-phosphoribosylamino)-pyrimidine + formate + 2 phosphate + 3 H(+). Its pathway is cofactor biosynthesis; riboflavin biosynthesis; 5-amino-6-(D-ribitylamino)uracil from GTP: step 1/4. Functionally, catalyzes the conversion of GTP to 2,5-diamino-6-ribosylamino-4(3H)-pyrimidinone 5'-phosphate (DARP), formate and pyrophosphate. This Neisseria gonorrhoeae (strain ATCC 700825 / FA 1090) protein is GTP cyclohydrolase-2.